Reading from the N-terminus, the 490-residue chain is Glutamate--tRNA ligase 2 (490 aa).

Residues Pro33–Gly43 carry the 'HIGH' region motif. The 'KMSKS' region signature appears at Lys262–Arg266. Position 265 (Lys265) interacts with ATP.

Belongs to the class-I aminoacyl-tRNA synthetase family. Glutamate--tRNA ligase type 1 subfamily. In terms of assembly, monomer.

It localises to the cytoplasm. The catalysed reaction is tRNA(Glu) + L-glutamate + ATP = L-glutamyl-tRNA(Glu) + AMP + diphosphate. In terms of biological role, catalyzes the attachment of glutamate to tRNA(Glu) in a two-step reaction: glutamate is first activated by ATP to form Glu-AMP and then transferred to the acceptor end of tRNA(Glu). The protein is Glutamate--tRNA ligase 2 of Parvibaculum lavamentivorans (strain DS-1 / DSM 13023 / NCIMB 13966).